The primary structure comprises 495 residues: MADRNLRDLLAPWVAGLPARELREMTLDSRVAAAGDLFVAVVGHQADGRRYIPQAIAQGVAAIIVEAKDEATDGEIREMHGVPVVYLSQLNERLSALAGRFYHEPSENMRLVAVTGTNGKTTTTQLLAQWSQLLGETSAVMGTVGNGLLGKVIPTENTTGSAVDVQHVLASLVAQGATFGAMEVSSHGLVQHRVAALKFAASVFTNLSRDHLDYHGDMAHYEAAKWMLYSTHHHGQAIVNADDEVGRRWLASLPDAVAVSMEGHINPNCHGRWLKAEAVEYHDRGATIRFASSWGEGEIESRLMGAFNVSNLLLALATLLALGYPLTDLLKTAARLQPVCGRMEVFTAPGKPTVVVDYAHTPDALEKALQAARLHCAGKLWCVFGCGGDRDKGKRPLMGAIAEEFADIVVVTDDNPRTEEPRAIINDILAGMLDAGQVRVMEGRAEAVTNAIMQAKDNDVVLIAGKGHEDYQIVGTQRLDYSDRVTAARLLGVIA.

UDP-N-acetyl-alpha-D-muramoyl-L-alanyl-D-glutamate-binding positions include Leu27, Ser29, and 44–46 (HQA). An ATP-binding site is contributed by 116–122 (GTNGKTT). Residues Asn157, 158-159 (TT), Ser185, Gln191, and Arg193 contribute to the UDP-N-acetyl-alpha-D-muramoyl-L-alanyl-D-glutamate site. Lys225 is modified (N6-carboxylysine). Residues Arg390, 414 to 417 (DNPR), Gly465, and Glu469 each bind meso-2,6-diaminopimelate. The Meso-diaminopimelate recognition motif motif lies at 414-417 (DNPR).

It belongs to the MurCDEF family. MurE subfamily. Mg(2+) serves as cofactor. In terms of processing, carboxylation is probably crucial for Mg(2+) binding and, consequently, for the gamma-phosphate positioning of ATP.

Its subcellular location is the cytoplasm. It catalyses the reaction UDP-N-acetyl-alpha-D-muramoyl-L-alanyl-D-glutamate + meso-2,6-diaminopimelate + ATP = UDP-N-acetyl-alpha-D-muramoyl-L-alanyl-gamma-D-glutamyl-meso-2,6-diaminopimelate + ADP + phosphate + H(+). Its pathway is cell wall biogenesis; peptidoglycan biosynthesis. Its function is as follows. Catalyzes the addition of meso-diaminopimelic acid to the nucleotide precursor UDP-N-acetylmuramoyl-L-alanyl-D-glutamate (UMAG) in the biosynthesis of bacterial cell-wall peptidoglycan. This chain is UDP-N-acetylmuramoyl-L-alanyl-D-glutamate--2,6-diaminopimelate ligase, found in Salmonella paratyphi A (strain ATCC 9150 / SARB42).